Reading from the N-terminus, the 154-residue chain is dCTP deaminase (154 aa).

DCTP-binding positions include 79-84 (RSSLAR), Asp95, Gln124, and Tyr138.

Belongs to the dCTP deaminase family. As to quaternary structure, homotrimer.

The enzyme catalyses dCTP + H2O + H(+) = dUTP + NH4(+). The protein operates within pyrimidine metabolism; dUMP biosynthesis; dUMP from dCTP (dUTP route): step 1/2. Its function is as follows. Catalyzes the deamination of dCTP to dUTP. The chain is dCTP deaminase from Pyrococcus abyssi (strain GE5 / Orsay).